The chain runs to 365 residues: Ribosomal RNA large subunit methyltransferase M (365 aa).

S-adenosyl-L-methionine contacts are provided by residues serine 193, 226-229 (CPGG), aspartate 245, aspartate 265, and aspartate 282. Lysine 311 functions as the Proton acceptor in the catalytic mechanism.

It belongs to the class I-like SAM-binding methyltransferase superfamily. RNA methyltransferase RlmE family. RlmM subfamily. In terms of assembly, monomer.

Its subcellular location is the cytoplasm. It catalyses the reaction cytidine(2498) in 23S rRNA + S-adenosyl-L-methionine = 2'-O-methylcytidine(2498) in 23S rRNA + S-adenosyl-L-homocysteine + H(+). Functionally, catalyzes the 2'-O-methylation at nucleotide C2498 in 23S rRNA. This is Ribosomal RNA large subunit methyltransferase M from Alteromonas mediterranea (strain DSM 17117 / CIP 110805 / LMG 28347 / Deep ecotype).